Consider the following 151-residue polypeptide: Minor curlin subunit (151 aa).

An N-terminal signal peptide occupies residues 1-21 (MKNKLLFMMLTILGAPGIATA).

It belongs to the CsgA/CsgB family.

It is found in the fimbrium. Curlin is the structural subunit of the curli. Curli are coiled surface structures that assemble preferentially at growth temperatures below 37 degrees Celsius. Curli can bind to fibronectin. The minor subunit is the nucleation component of curlin monomers. This is Minor curlin subunit (csgB) from Salmonella enteritidis.